Consider the following 387-residue polypeptide: Protein NDRG3 (387 aa).

The tract at residues Pro329 to Cys387 is disordered. Low complexity predominate over residues Thr359 to Gln377.

This sequence belongs to the NDRG family.

The polypeptide is Protein NDRG3 (Xenopus tropicalis (Western clawed frog)).